Reading from the N-terminus, the 722-residue chain is D-(-)-3-hydroxybutyrate oligomer hydrolase (722 aa).

The segment covering 1–11 (MQQRHLSQSAH) has biased composition (polar residues). The segment at 1–20 (MQQRHLSQSAHSHGHGTRRA) is disordered. The N-terminal stretch at 1–36 (MQQRHLSQSAHSHGHGTRRAHRRNTIAIAVATLAVA) is a signal peptide. The active-site Charge relay system is the Ser-327. The disordered stretch occupies residues 671 to 697 (PPSQVVRTTPRGGADTDTVGPRIQPSN).

This sequence belongs to the D-(-)-3-hydroxybutyrate oligomer hydrolase family.

Its subcellular location is the secreted. The enzyme catalyses (3R)-hydroxybutanoate dimer + H2O = 2 (R)-3-hydroxybutanoate + H(+). Its pathway is lipid metabolism; butanoate metabolism. Functionally, participates in the degradation of poly-3-hydroxybutyrate (PHB). It works downstream of poly(3-hydroxybutyrate) depolymerase, hydrolyzing D(-)-3-hydroxybutyrate oligomers of various length (3HB-oligomers) into 3HB-monomers. The protein is D-(-)-3-hydroxybutyrate oligomer hydrolase of Cupriavidus metallidurans (strain ATCC 43123 / DSM 2839 / NBRC 102507 / CH34) (Ralstonia metallidurans).